A 255-amino-acid polypeptide reads, in one-letter code: tRNA (guanine-N(1)-)-methyltransferase (255 aa).

S-adenosyl-L-methionine contacts are provided by residues glycine 113 and 133–138 (IGDYVL).

This sequence belongs to the RNA methyltransferase TrmD family. Homodimer.

It is found in the cytoplasm. It carries out the reaction guanosine(37) in tRNA + S-adenosyl-L-methionine = N(1)-methylguanosine(37) in tRNA + S-adenosyl-L-homocysteine + H(+). Specifically methylates guanosine-37 in various tRNAs. In Salmonella agona (strain SL483), this protein is tRNA (guanine-N(1)-)-methyltransferase.